The sequence spans 1362 residues: Integrator complex subunit 2 homolog (1362 aa).

Residues 1 to 10 show a composition bias toward low complexity; sequence MITSNNNNKN. 3 disordered regions span residues 1-20, 629-660, and 928-963; these read MITS…EMKS, TTGT…SSPN, and NNNK…EEEE. The segment covering 945–955 has biased composition (basic and acidic residues); that stretch reads DDVKMKDKEKE.

It belongs to the Integrator subunit 2 family. In terms of assembly, component of the Integrator complex. The core complex associates with protein phosphatase 2A subunits, to form the Integrator-PP2A (INTAC) complex.

It localises to the nucleus. The protein localises to the cytoplasm. Component of the integrator complex, a multiprotein complex that terminates RNA polymerase II (Pol II) transcription in the promoter-proximal region of genes. The integrator complex provides a quality checkpoint during transcription elongation by driving premature transcription termination of transcripts that are unfavorably configured for transcriptional elongation: the complex terminates transcription by (1) catalyzing dephosphorylation of the C-terminal domain (CTD) of Pol II subunit polr2a, (2) degrading the exiting nascent RNA transcript via endonuclease activity and (3) promoting the release of Pol II from bound DNA. The integrator complex is also involved in terminating the synthesis of non-coding Pol II transcripts, such as enhancer RNAs (eRNAs), small nuclear RNAs (snRNAs), telomerase RNAs and long non-coding RNAs (lncRNAs). This is Integrator complex subunit 2 homolog (ints2) from Dictyostelium discoideum (Social amoeba).